The chain runs to 570 residues: Spermatocyte protein spe-26 (570 aa).

6 Kelch repeats span residues 244–291, 293–338, 341–393, 395–440, 442–487, and 489–535; these read VLII…IVDG, LYLF…SVVY, RIYV…VFEN, IYVS…NHGN, LLIV…SYKG, and LFSV…VAPN.

In terms of tissue distribution, testis, in both spermatogonial cells and spermatocytes.

It is found in the cytoplasm. Its subcellular location is the cytoskeleton. Its function is as follows. May play a role in the spermatocyte cytoskeleton, possibly interacting with actin. The chain is Spermatocyte protein spe-26 (spe-26) from Caenorhabditis elegans.